The sequence spans 486 residues: Palmitoleoyl-protein carboxylesterase notum2 (486 aa).

The N-terminal stretch at 1 to 18 (MRILEIFAILLILKEVRP) is a signal peptide. N-linked (GlcNAc...) asparagine glycosylation occurs at N183. Active-site charge relay system residues include S223, D331, and H380.

The protein belongs to the pectinacetylesterase family. Notum subfamily.

It is found in the secreted. It carries out the reaction [Wnt protein]-O-(9Z)-hexadecenoyl-L-serine + H2O = [Wnt protein]-L-serine + (9Z)-hexadecenoate + H(+). Carboxylesterase that acts as a key negative regulator of the Wnt signaling pathway by specifically mediating depalmitoleoylation of WNT proteins. Serine palmitoleoylation of WNT proteins is required for efficient binding to frizzled receptors. The polypeptide is Palmitoleoyl-protein carboxylesterase notum2 (Xenopus laevis (African clawed frog)).